A 550-amino-acid chain; its full sequence is C-type lectin domain family 4 member F (550 aa).

Topologically, residues 1–42 are cytoplasmic; it reads MKEAELNRDVAKFCTDNQCVILQPQGLGPKSAAPMAPRTLRH. A helical; Signal-anchor for type II membrane protein membrane pass occupies residues 43-69; that stretch reads VQAIVALVVVTVFFSLLALFVVVLQPW. Residues 70 to 550 lie on the Extracellular side of the membrane; it reads RQKQNEDHPV…DWSVARTDQS (481 aa). 6 N-linked (GlcNAc...) asparagine glycosylation sites follow: N87, N93, N115, N132, N209, and N255. In terms of domain architecture, C-type lectin spans 438 to 538; it reads NFCVSQGAHL…GTAYNWVCKK (101 aa). 2 cysteine pairs are disulfide-bonded: C440-C536 and C516-C528.

In terms of tissue distribution, kupffer cells.

It is found in the membrane. In terms of biological role, receptor with an affinity for galactose and fucose. Could be involved in endocytosis. The sequence is that of C-type lectin domain family 4 member F (Clec4f) from Rattus norvegicus (Rat).